Here is a 308-residue protein sequence, read N- to C-terminus: Glycine betaine uptake system ATP-binding protein YehX (308 aa).

The ABC transporter domain occupies 2 to 235 (IEFSHVSKLF…PANDFVRQFF (234 aa)). 34–41 (GTSGSGKS) lines the ATP pocket.

It belongs to the ABC transporter superfamily. The complex is composed of two ATP-binding proteins (YehX), two transmembrane proteins (YehW and YehY) and a solute-binding protein (YehZ).

It carries out the reaction glycine betaine(out) + ATP + H2O = glycine betaine(in) + ADP + phosphate + H(+). In terms of biological role, part of an ABC transporter complex involved in low-affinity glycine betaine uptake. Probably responsible for energy coupling to the transport system. The protein is Glycine betaine uptake system ATP-binding protein YehX (yehX) of Escherichia coli (strain K12).